Here is a 133-residue protein sequence, read N- to C-terminus: Small ribosomal subunit protein uS8c (133 aa).

Belongs to the universal ribosomal protein uS8 family. As to quaternary structure, part of the 30S ribosomal subunit.

The protein resides in the plastid. It is found in the chloroplast. Functionally, one of the primary rRNA binding proteins, it binds directly to 16S rRNA central domain where it helps coordinate assembly of the platform of the 30S subunit. The sequence is that of Small ribosomal subunit protein uS8c (rps8) from Cyanidium caldarium (Red alga).